The primary structure comprises 409 residues: 4-hydroxy-3-methylbut-2-en-1-yl diphosphate synthase (flavodoxin) (409 aa).

The [4Fe-4S] cluster site is built by C298, C301, C344, and E351.

This sequence belongs to the IspG family. It depends on [4Fe-4S] cluster as a cofactor.

It catalyses the reaction (2E)-4-hydroxy-3-methylbut-2-enyl diphosphate + oxidized [flavodoxin] + H2O + 2 H(+) = 2-C-methyl-D-erythritol 2,4-cyclic diphosphate + reduced [flavodoxin]. Its pathway is isoprenoid biosynthesis; isopentenyl diphosphate biosynthesis via DXP pathway; isopentenyl diphosphate from 1-deoxy-D-xylulose 5-phosphate: step 5/6. In terms of biological role, converts 2C-methyl-D-erythritol 2,4-cyclodiphosphate (ME-2,4cPP) into 1-hydroxy-2-methyl-2-(E)-butenyl 4-diphosphate. This chain is 4-hydroxy-3-methylbut-2-en-1-yl diphosphate synthase (flavodoxin), found in Dechloromonas aromatica (strain RCB).